We begin with the raw amino-acid sequence, 365 residues long: Peptide chain release factor 2 (365 aa).

Gln-252 bears the N5-methylglutamine mark.

This sequence belongs to the prokaryotic/mitochondrial release factor family. In terms of processing, methylated by PrmC. Methylation increases the termination efficiency of RF2.

It is found in the cytoplasm. Functionally, peptide chain release factor 2 directs the termination of translation in response to the peptide chain termination codons UGA and UAA. This Haemophilus ducreyi (strain 35000HP / ATCC 700724) protein is Peptide chain release factor 2.